The sequence spans 183 residues: Glutathione-regulated potassium-efflux system ancillary protein KefG (183 aa).

It belongs to the NAD(P)H dehydrogenase (quinone) family. KefG subfamily. As to quaternary structure, interacts with KefB.

Its subcellular location is the cell inner membrane. The enzyme catalyses a quinone + NADH + H(+) = a quinol + NAD(+). It catalyses the reaction a quinone + NADPH + H(+) = a quinol + NADP(+). Functionally, regulatory subunit of a potassium efflux system that confers protection against electrophiles. Required for full activity of KefB. This is Glutathione-regulated potassium-efflux system ancillary protein KefG from Pectobacterium carotovorum subsp. carotovorum (strain PC1).